The chain runs to 417 residues: NADH-quinone oxidoreductase subunit D (417 aa).

Belongs to the complex I 49 kDa subunit family. In terms of assembly, NDH-1 is composed of 14 different subunits. Subunits NuoB, C, D, E, F, and G constitute the peripheral sector of the complex.

It localises to the cell inner membrane. It carries out the reaction a quinone + NADH + 5 H(+)(in) = a quinol + NAD(+) + 4 H(+)(out). NDH-1 shuttles electrons from NADH, via FMN and iron-sulfur (Fe-S) centers, to quinones in the respiratory chain. The immediate electron acceptor for the enzyme in this species is believed to be ubiquinone. Couples the redox reaction to proton translocation (for every two electrons transferred, four hydrogen ions are translocated across the cytoplasmic membrane), and thus conserves the redox energy in a proton gradient. The sequence is that of NADH-quinone oxidoreductase subunit D from Methylobacillus flagellatus (strain ATCC 51484 / DSM 6875 / VKM B-1610 / KT).